Consider the following 164-residue polypeptide: Transcription elongation factor GreA (164 aa).

It belongs to the GreA/GreB family.

In terms of biological role, necessary for efficient RNA polymerase transcription elongation past template-encoded arresting sites. The arresting sites in DNA have the property of trapping a certain fraction of elongating RNA polymerases that pass through, resulting in locked ternary complexes. Cleavage of the nascent transcript by cleavage factors such as GreA or GreB allows the resumption of elongation from the new 3'terminus. GreA releases sequences of 2 to 3 nucleotides. The chain is Transcription elongation factor GreA from Helicobacter acinonychis (strain Sheeba).